The sequence spans 275 residues: Pyrroline-5-carboxylate reductase (275 aa).

It belongs to the pyrroline-5-carboxylate reductase family.

The protein localises to the cytoplasm. It carries out the reaction L-proline + NADP(+) = (S)-1-pyrroline-5-carboxylate + NADPH + 2 H(+). It catalyses the reaction L-proline + NAD(+) = (S)-1-pyrroline-5-carboxylate + NADH + 2 H(+). It participates in amino-acid biosynthesis; L-proline biosynthesis; L-proline from L-glutamate 5-semialdehyde: step 1/1. Its function is as follows. Catalyzes the reduction of 1-pyrroline-5-carboxylate (PCA) to L-proline. This is Pyrroline-5-carboxylate reductase from Pasteurella multocida (strain Pm70).